Here is a 284-residue protein sequence, read N- to C-terminus: MAQIIDGRGLAEKLQKKLAEKTARLKEKTGQVPGLVVIVVGNNPASQIYVRNKERSALAAGFRSKVERLPEETSQEELLSLIETYNQNPDWHGILVQLPLPEHIDDEAVLLAIDPDKDVDGFHPLNMGKLWSGHPVMIPATPAGIMAMFHEYGIELEGKRAVVIGRSNIVGKPMAQLLLAKNATVTLTHSRTHNLAKTAKRADILVVAIGRGHFVTKNFVKEGAVVIDVGMNRDENGKLIGDVKFDEVAEIASLITPVPGGVGPMTITMLMEQTYQAFKRSLES.

NADP(+) is bound by residues Gly-165–Ser-167 and Ser-190.

This sequence belongs to the tetrahydrofolate dehydrogenase/cyclohydrolase family. In terms of assembly, homodimer.

It carries out the reaction (6R)-5,10-methylene-5,6,7,8-tetrahydrofolate + NADP(+) = (6R)-5,10-methenyltetrahydrofolate + NADPH. The enzyme catalyses (6R)-5,10-methenyltetrahydrofolate + H2O = (6R)-10-formyltetrahydrofolate + H(+). It functions in the pathway one-carbon metabolism; tetrahydrofolate interconversion. Its function is as follows. Catalyzes the oxidation of 5,10-methylenetetrahydrofolate to 5,10-methenyltetrahydrofolate and then the hydrolysis of 5,10-methenyltetrahydrofolate to 10-formyltetrahydrofolate. The polypeptide is Bifunctional protein FolD (Streptococcus sanguinis (strain SK36)).